We begin with the raw amino-acid sequence, 323 residues long: Caspase-1 (323 aa).

A propeptide spanning residues 1–33 (MTDECVTRNYGVGIRSPNGSENRGSFIMADNTD) is cleaved from the precursor. Catalysis depends on residues His-154 and Cys-196. A propeptide spanning residues 203-215 (GGITLEKGVTETD) is cleaved from the precursor.

Belongs to the peptidase C14A family. As to quaternary structure, heterotetramer that consists of two anti-parallel arranged heterodimers, each one formed by a 22 kDa (p22) and a 13 kDa (p13) subunit.

In terms of biological role, involved in the activation cascade of caspases responsible for apoptosis execution. Proteolytically cleaves poly(ADP-ribose) polymerase (PARP). Loss of zygotic DCP-1 function causes larval lethality and melanotic tumors. The sequence is that of Caspase-1 (Dcp-1) from Drosophila melanogaster (Fruit fly).